Consider the following 167-residue polypeptide: DNA-directed RNA polymerase II subunit rpb-9 (167 aa).

The segment at 28 to 49 (DDMYDQNGASPAPSQNEKPGKS) is disordered. Over residues 34–44 (NGASPAPSQNE) the composition is skewed to polar residues. The Zn(2+) site is built by Cys-59, Cys-62, Cys-81, Cys-84, Cys-128, Cys-131, Cys-156, and Cys-161. A C4-type zinc finger spans residues 59 to 84 (CPECNNMLYPREDKESRVLMYSCRNC). A TFIIS-type zinc finger spans residues 124-166 (EEHQCPVCGKSKAVFFQAQTKKAEEEMRLYYVCASQDCQHRWT).

Belongs to the archaeal RpoM/eukaryotic RPA12/RPB9/RPC11 RNA polymerase family. As to quaternary structure, component of the RNA polymerase II (Pol II) complex consisting of 12 subunits. As to expression, expressed in the soma and in the germline.

It is found in the nucleus. Its subcellular location is the nucleolus. Its function is as follows. DNA-dependent RNA polymerase catalyzes the transcription of DNA into RNA using the four ribonucleoside triphosphates as substrates. Component of RNA polymerase II which synthesizes mRNA precursors and many functional non-coding RNAs. Pol II is the central component of the basal RNA polymerase II transcription machinery. It is composed of mobile elements that move relative to each other. RPB9 is part of the upper jaw surrounding the central large cleft and thought to grab the incoming DNA template. Recruits ints-6, a component of the Integrator complex to PIWI-interacting RNA (piRNA) genes, to mediate Integrator complex-dependent cleavage of 3' ends of nascent transcripts upon RNA Pol II backtracking to terminate transcription and generate piRNA precursors. Promotes the biogenesis of secondary 22G-siRNAs (a class of 22 nucleotide siRNAs that possess a triphosphorylated guanine residue at the 5'-end). Involved in gene silencing mediated by a class of 21 nucleotide piRNAs that possess a uracil residue at the 5'-end (also called 21U-RNAs) and guide the Piwi protein prg-1 to its DNA targets for silencing. Plays a role in small RNA-directed transgenerational epigenetic inheritance (also called RNAe) over several generations. Not required for the transgenerational inheritance of exogenous small interfering RNAs (RNAi). May play a role in the silencing of the DNA transposable elements from the DNA transposon families, Chapaev-2 and CEMUDR1. The polypeptide is DNA-directed RNA polymerase II subunit rpb-9 (Caenorhabditis elegans).